A 143-amino-acid chain; its full sequence is Large ribosomal subunit protein uL13 (143 aa).

The protein belongs to the universal ribosomal protein uL13 family. As to quaternary structure, part of the 50S ribosomal subunit.

Its function is as follows. This protein is one of the early assembly proteins of the 50S ribosomal subunit, although it is not seen to bind rRNA by itself. It is important during the early stages of 50S assembly. This Dehalococcoides mccartyi (strain CBDB1) protein is Large ribosomal subunit protein uL13.